Reading from the N-terminus, the 231-residue chain is Ribosomal RNA small subunit methyltransferase G (231 aa).

S-adenosyl-L-methionine contacts are provided by residues Gly75, Phe80, 126-127 (AE), and Arg142.

This sequence belongs to the methyltransferase superfamily. RNA methyltransferase RsmG family.

The protein localises to the cytoplasm. Its function is as follows. Specifically methylates the N7 position of a guanine in 16S rRNA. This is Ribosomal RNA small subunit methyltransferase G from Mycoplasma capricolum subsp. capricolum (strain California kid / ATCC 27343 / NCTC 10154).